Consider the following 212-residue polypeptide: ATP-dependent Clp protease proteolytic subunit (212 aa).

The Nucleophile role is filled by Ser114. His139 is an active-site residue.

This sequence belongs to the peptidase S14 family. As to quaternary structure, fourteen ClpP subunits assemble into 2 heptameric rings which stack back to back to give a disk-like structure with a central cavity, resembling the structure of eukaryotic proteasomes.

The protein localises to the cytoplasm. It catalyses the reaction Hydrolysis of proteins to small peptides in the presence of ATP and magnesium. alpha-casein is the usual test substrate. In the absence of ATP, only oligopeptides shorter than five residues are hydrolyzed (such as succinyl-Leu-Tyr-|-NHMec, and Leu-Tyr-Leu-|-Tyr-Trp, in which cleavage of the -Tyr-|-Leu- and -Tyr-|-Trp bonds also occurs).. Cleaves peptides in various proteins in a process that requires ATP hydrolysis. Has a chymotrypsin-like activity. Plays a major role in the degradation of misfolded proteins. This is ATP-dependent Clp protease proteolytic subunit from Laribacter hongkongensis (strain HLHK9).